A 759-amino-acid chain; its full sequence is Phosphoribosylformylglycinamidine synthase subunit PurL (759 aa).

His-61 is an active-site residue. ATP contacts are provided by Tyr-64 and Lys-105. Glu-107 is a Mg(2+) binding site. Substrate is bound by residues 108-111 (SHNH) and Arg-130. The active-site Proton acceptor is His-109. Asp-131 is a Mg(2+) binding site. Gln-260 serves as a coordination point for substrate. Asp-288 contributes to the Mg(2+) binding site. 332-334 (ESQ) contacts substrate. Asp-520 and Gly-557 together coordinate ATP. Asn-558 lines the Mg(2+) pocket. Ser-560 contacts substrate.

The protein belongs to the FGAMS family. In terms of assembly, monomer. Part of the FGAM synthase complex composed of 1 PurL, 1 PurQ and 2 PurS subunits.

Its subcellular location is the cytoplasm. The catalysed reaction is N(2)-formyl-N(1)-(5-phospho-beta-D-ribosyl)glycinamide + L-glutamine + ATP + H2O = 2-formamido-N(1)-(5-O-phospho-beta-D-ribosyl)acetamidine + L-glutamate + ADP + phosphate + H(+). It functions in the pathway purine metabolism; IMP biosynthesis via de novo pathway; 5-amino-1-(5-phospho-D-ribosyl)imidazole from N(2)-formyl-N(1)-(5-phospho-D-ribosyl)glycinamide: step 1/2. Its function is as follows. Part of the phosphoribosylformylglycinamidine synthase complex involved in the purines biosynthetic pathway. Catalyzes the ATP-dependent conversion of formylglycinamide ribonucleotide (FGAR) and glutamine to yield formylglycinamidine ribonucleotide (FGAM) and glutamate. The FGAM synthase complex is composed of three subunits. PurQ produces an ammonia molecule by converting glutamine to glutamate. PurL transfers the ammonia molecule to FGAR to form FGAM in an ATP-dependent manner. PurS interacts with PurQ and PurL and is thought to assist in the transfer of the ammonia molecule from PurQ to PurL. This is Phosphoribosylformylglycinamidine synthase subunit PurL from Thermoplasma acidophilum (strain ATCC 25905 / DSM 1728 / JCM 9062 / NBRC 15155 / AMRC-C165).